Consider the following 194-residue polypeptide: 21 kDa hemolysin (194 aa).

Positions Met-1–Ala-19 are cleaved as a signal peptide. 2 BON domains span residues Asp-49–Glu-118 and Ile-127–Gln-194.

The protein localises to the periplasm. In Actinobacillus pleuropneumoniae (Haemophilus pleuropneumoniae), this protein is 21 kDa hemolysin (hly).